Consider the following 349-residue polypeptide: Draxin (349 aa).

A signal peptide spans 1-25 (MAGPAIHTAPMLFLVLLLPLELSLA). 3 disordered regions span residues 38–79 (PENH…QDGA), 118–145 (PYPE…RRDR), and 244–273 (DGWP…EGEP). Residues 120 to 131 (PEKENRPPGWER) show a composition bias toward basic and acidic residues. Composition is skewed to basic residues over residues 132 to 145 (TRKR…RRDR) and 249 to 258 (AKKKEKHRGK). Asparagine 264 is a glycosylation site (N-linked (GlcNAc...) asparagine).

The protein belongs to the draxin family. In terms of assembly, interacts with LRP6.

The protein resides in the secreted. Functionally, chemorepulsive axon guidance protein required for the development of spinal cord and forebrain commissures. Acts as a chemorepulsive guidance protein for commissural axons during development. Able to inhibit or repel neurite outgrowth from dorsal spinal cord. Inhibits the stabilization of cytosolic beta-catenin (CTNNB1) via its interaction with LRP6, thereby acting as an antagonist of Wnt signaling pathway. This chain is Draxin, found in Homo sapiens (Human).